A 559-amino-acid chain; its full sequence is Dihydroxy-acid dehydratase (559 aa).

Aspartate 81 is a Mg(2+) binding site. Cysteine 122 is a [2Fe-2S] cluster binding site. Residues aspartate 123 and lysine 124 each contribute to the Mg(2+) site. An N6-carboxylysine modification is found at lysine 124. Residue cysteine 195 coordinates [2Fe-2S] cluster. Glutamate 448 lines the Mg(2+) pocket. Catalysis depends on serine 474, which acts as the Proton acceptor.

It belongs to the IlvD/Edd family. Homodimer. Requires [2Fe-2S] cluster as cofactor. The cofactor is Mg(2+).

The catalysed reaction is (2R)-2,3-dihydroxy-3-methylbutanoate = 3-methyl-2-oxobutanoate + H2O. The enzyme catalyses (2R,3R)-2,3-dihydroxy-3-methylpentanoate = (S)-3-methyl-2-oxopentanoate + H2O. It functions in the pathway amino-acid biosynthesis; L-isoleucine biosynthesis; L-isoleucine from 2-oxobutanoate: step 3/4. It participates in amino-acid biosynthesis; L-valine biosynthesis; L-valine from pyruvate: step 3/4. Its function is as follows. Functions in the biosynthesis of branched-chain amino acids. Catalyzes the dehydration of (2R,3R)-2,3-dihydroxy-3-methylpentanoate (2,3-dihydroxy-3-methylvalerate) into 2-oxo-3-methylpentanoate (2-oxo-3-methylvalerate) and of (2R)-2,3-dihydroxy-3-methylbutanoate (2,3-dihydroxyisovalerate) into 2-oxo-3-methylbutanoate (2-oxoisovalerate), the penultimate precursor to L-isoleucine and L-valine, respectively. The protein is Dihydroxy-acid dehydratase of Geobacillus kaustophilus (strain HTA426).